The primary structure comprises 307 residues: Serine/threonine-protein phosphatase PP2A-2 catalytic subunit (307 aa).

The Mn(2+) site is built by aspartate 55, histidine 57, aspartate 83, and asparagine 115. Histidine 116 acts as the Proton donor in catalysis. Positions 165 and 239 each coordinate Mn(2+).

It belongs to the PPP phosphatase family. PP-2A subfamily. The cofactor is Mn(2+).

Its subcellular location is the cytoplasm. It catalyses the reaction O-phospho-L-seryl-[protein] + H2O = L-seryl-[protein] + phosphate. The catalysed reaction is O-phospho-L-threonyl-[protein] + H2O = L-threonyl-[protein] + phosphate. This is Serine/threonine-protein phosphatase PP2A-2 catalytic subunit (PP2A2) from Oryza sativa subsp. indica (Rice).